The sequence spans 169 residues: Protein UL138 (169 aa).

The helical transmembrane segment at 8-28 threads the bilayer; that stretch reads VGLPIIGVMLVLIVAILCYLA. Positions 109-133 are disordered; it reads DRRAGSSSSSSVHVANQRNSVPPPD.

As to quaternary structure, interacts with host TNFR1. Interacts with host MRP1. Interacts with host UAF1/WDR48. Interacts with host STING1.

The protein resides in the host Golgi apparatus membrane. Its function is as follows. Plays an important role in the establishment of latent viral infection. Modulates the expression of several host cell surface receptors such as TNFR1, CD36 or the MRP1 transporter during productive infection. For instance, associates with host MRP1 and induces its lysosomal degradation. Plays an inhibitory role in the host cGAS/STING/TBK1 pathway and upstream of IRF3 phosphorylation and NF-kappa-B leading to inhibition of interferon beta production during both lytic and latent infections. Also participates in the establishment of latency by sustaining an innate immune response through phosphorylation and activation of host STAT1. The sequence is that of Protein UL138 (UL138) from Human cytomegalovirus (strain Merlin) (HHV-5).